The sequence spans 225 residues: GTP cyclohydrolase III (225 aa).

The protein belongs to the archaeal-type GTP cyclohydrolase family.

It carries out the reaction GTP + 3 H2O = 2-amino-5-formylamino-6-(5-phospho-D-ribosylamino)pyrimidin-4(3H)-one + 2 phosphate + 2 H(+). In terms of biological role, catalyzes the formation of 2-amino-5-formylamino-6-ribofuranosylamino-4(3H)-pyrimidinone ribonucleotide monophosphate and inorganic phosphate from GTP. Also has an independent pyrophosphate phosphohydrolase activity. The polypeptide is GTP cyclohydrolase III (Sulfurisphaera tokodaii (strain DSM 16993 / JCM 10545 / NBRC 100140 / 7) (Sulfolobus tokodaii)).